Reading from the N-terminus, the 45-residue chain is MFCHLLGDNYEAVIYSTENRFTPSVYSCGNSGCLVLQFADIQSSP.

This is an uncharacterized protein from Xylella fastidiosa (strain Temecula1 / ATCC 700964).